The chain runs to 152 residues: MKLILTADVDHLGSVGDTVEVKDGYGRNFLLPHGLAIVASRGAQRQADEIRRARETKAMRDREHANEIKVAIEALGSVSLPMKTVADSGKLFGSVTAGDVVAAIKKAGGPNLDKRIVRLPKTHIKAVGTHPVSVHLHPEVDVVVLLDVVAAR.

This sequence belongs to the bacterial ribosomal protein bL9 family.

In terms of biological role, binds to the 23S rRNA. This Mycobacterium leprae (strain Br4923) protein is Large ribosomal subunit protein bL9.